The chain runs to 669 residues: Heat shock 70 kDa protein BIP3 (669 aa).

A signal peptide spans 1–32 (MARGATWTRRLHLHGLFLAVLLLLTLPAGSTA). N423 carries an N-linked (GlcNAc...) asparagine glycan. A disordered region spans residues 646 to 669 (AVYQRSGGSRRDGDGGGDDDHDEL). Residues 660–669 (GGGDDDHDEL) show a composition bias toward acidic residues. A Prevents secretion from ER motif is present at residues 666–669 (HDEL).

The protein belongs to the heat shock protein 70 family.

It localises to the endoplasmic reticulum. Functionally, functions as a chaperone during endoplasmic reticulum (ER) stress response. In Oryza sativa subsp. japonica (Rice), this protein is Heat shock 70 kDa protein BIP3.